The sequence spans 333 residues: Ribokinase (333 aa).

Substrate-binding positions include 10–12, 38–42, and glutamate 149; these read NYD and GKGLN. ATP is bound by residues asparagine 193 and 248–253; that span reads TLGSRG. Residues aspartate 277 and threonine 279 each coordinate K(+). ATP is bound at residue 282-283; the sequence is GD. Aspartate 283 is a substrate binding site. The active-site Proton acceptor is the aspartate 283. Residues threonine 313, arginine 316, glycine 318, and serine 322 each contribute to the K(+) site.

Belongs to the carbohydrate kinase PfkB family. Ribokinase subfamily. Homodimer. The cofactor is Mg(2+).

The protein localises to the cytoplasm. Its subcellular location is the nucleus. It carries out the reaction D-ribose + ATP = D-ribose 5-phosphate + ADP + H(+). Its pathway is carbohydrate metabolism; D-ribose degradation; D-ribose 5-phosphate from beta-D-ribopyranose: step 2/2. Its activity is regulated as follows. Activated by a monovalent cation that binds near, but not in, the active site. The most likely occupant of the site in vivo is potassium. Ion binding induces a conformational change that may alter substrate affinity. Catalyzes the phosphorylation of ribose at O-5 in a reaction requiring ATP and magnesium. The resulting D-ribose-5-phosphate can then be used either for sythesis of nucleotides, histidine, and tryptophan, or as a component of the pentose phosphate pathway. This Saccharomyces cerevisiae (strain ATCC 204508 / S288c) (Baker's yeast) protein is Ribokinase.